Consider the following 162-residue polypeptide: NADH-quinone oxidoreductase subunit I (162 aa).

2 4Fe-4S ferredoxin-type domains span residues 52–82 and 93–122; these read LRRY…IEAG and TRYD…EGPN. [4Fe-4S] cluster is bound by residues C62, C65, C68, C72, C102, C105, C108, and C112.

It belongs to the complex I 23 kDa subunit family. As to quaternary structure, NDH-1 is composed of 14 different subunits. Subunits NuoA, H, J, K, L, M, N constitute the membrane sector of the complex. Requires [4Fe-4S] cluster as cofactor.

It is found in the cell inner membrane. It carries out the reaction a quinone + NADH + 5 H(+)(in) = a quinol + NAD(+) + 4 H(+)(out). NDH-1 shuttles electrons from NADH, via FMN and iron-sulfur (Fe-S) centers, to quinones in the respiratory chain. The immediate electron acceptor for the enzyme in this species is believed to be ubiquinone. Couples the redox reaction to proton translocation (for every two electrons transferred, four hydrogen ions are translocated across the cytoplasmic membrane), and thus conserves the redox energy in a proton gradient. In Methylorubrum extorquens (strain PA1) (Methylobacterium extorquens), this protein is NADH-quinone oxidoreductase subunit I.